Consider the following 339-residue polypeptide: Malate/(S)-sulfolactate dehydrogenase (339 aa).

Belongs to the LDH2/MDH2 oxidoreductase family. In terms of assembly, homodimer.

It is found in the cytoplasm. The catalysed reaction is (S)-malate + NAD(+) = oxaloacetate + NADH + H(+). The enzyme catalyses (S)-malate + NADP(+) = oxaloacetate + NADPH + H(+). It carries out the reaction (2S)-3-sulfolactate + NAD(+) = 3-sulfopyruvate + NADH + H(+). Its function is as follows. Acts on oxaloacetate, sulfopyruvate but not on pyruvate. Has a higher selectivity for the coenzyme NADH than for NADPH. The chain is Malate/(S)-sulfolactate dehydrogenase (mdh) from Methanothermus fervidus (strain ATCC 43054 / DSM 2088 / JCM 10308 / V24 S).